Consider the following 186-residue polypeptide: Intraflagellar transport protein 27 homolog (186 aa).

GTP is bound by residues 12–19 (GDPTVGKT), 64–68 (DSAGK), and 123–126 (NKTD).

It belongs to the small GTPase superfamily. Rab family. As to quaternary structure, component of the IFT complex B, at least composed of IFT20, IFT22, IFT25, IFT27, IFT46, IFT52, TRAF3IP1/IFT54, IFT57, IFT74, IFT80, IFT81, and IFT88. Interacts with IFT25. Interacts with IFT70B. Interacts with RABL2/RABL2A; binding is equal in the presence of GTP or GDP. Interacts with IFT88. Interacts with ARL6; recognizes and binds with the GTP-free form of ARL6.

It is found in the cell projection. The protein resides in the cilium. It localises to the cytoplasm. Its subcellular location is the flagellum. Small GTPase-like component of the intraflagellar transport (IFT) complex B that promotes the exit of the BBSome complex from cilia via its interaction with ARL6. Not involved in entry of the BBSome complex into cilium. Prevents aggregation of GTP-free ARL6. Required for hedgehog signaling. Forms a subcomplex within the IFT complex B with IFT25. Its role in intraflagellar transport is mainly seen in tissues rich in ciliated cells such as kidney and testis. Essential for male fertility, spermiogenesis and sperm flagella formation. Plays a role in the early development of the kidney. May be involved in the regulation of ureteric bud initiation. This Bos taurus (Bovine) protein is Intraflagellar transport protein 27 homolog (IFT27).